A 696-amino-acid chain; its full sequence is MTPTSRTPPERAAELRQLLNQAAHSYYVLDTPTMEDAVYDRLYRELLDLEVKDSSLLTPDSPTQRIGGAPAQGFASVPHRIPLLSLDNAFNVDELTGWYVRLVKLLGYQTNPKTPQPDLSMVGELKIDGNALALSYEHGVLIRAATRGDGANGEEITANVRTIASIPLRLQLVHPPAWLEVRGEAFIPNSTFADINTARGERGDVAFANPRNACAGTLRQLDPKVVASRQLDFFAYTLHLPDNWQAKADDPASPMNQWAVLQWLQAIGFKVNPNTALLTDLTAVEHFFKLWDEARHQLPYATDGVVVKLNDLQLQETAGFTQKAPRWAIALKYAAEEAPSKLLRLTCQVGRTGAVTPVAEFEAIPLAGTSVSRATLHNANRVSELDLHSGDTIVVRKAGEIIPEVIGVLRELRPAGAQTLKLPHICPECRSDLVREEGEAATRCVNNSCPAILRGTLRHWVSKGALDVDGLGSKLIEQLVNRGLVQSIADLYALEASLLASMDRMGNKSTENLITALQASKSKPWHKQLYGLGIHHVGEVNAKALAKKFPSAATLANAACKAPEQITSVFGVGNEIAQSLQQWFATPANQELLAKLKQLGISLEANEDELAHDTDQKQRTVSLQGQTFVLTGTLPTLSRSEAQALIEAAGGKVNSSVSKNTSYVVAGAEAGSKLNKAEKLRVTVLNEEELLKLLAS.

NAD(+)-binding positions include 36–40 (DAVYD), 85–86 (SL), and glutamate 124. The N6-AMP-lysine intermediate role is filled by lysine 126. 4 residues coordinate NAD(+): arginine 147, glutamate 184, lysine 308, and lysine 332. The Zn(2+) site is built by cysteine 426, cysteine 429, cysteine 444, and cysteine 449. Positions 618–696 (QRTVSLQGQT…EEELLKLLAS (79 aa)) constitute a BRCT domain.

Belongs to the NAD-dependent DNA ligase family. LigA subfamily. Mg(2+) is required as a cofactor. Mn(2+) serves as cofactor.

It carries out the reaction NAD(+) + (deoxyribonucleotide)n-3'-hydroxyl + 5'-phospho-(deoxyribonucleotide)m = (deoxyribonucleotide)n+m + AMP + beta-nicotinamide D-nucleotide.. Functionally, DNA ligase that catalyzes the formation of phosphodiester linkages between 5'-phosphoryl and 3'-hydroxyl groups in double-stranded DNA using NAD as a coenzyme and as the energy source for the reaction. It is essential for DNA replication and repair of damaged DNA. The sequence is that of DNA ligase from Prochlorococcus marinus (strain MIT 9303).